A 419-amino-acid chain; its full sequence is L-rhamnose isomerase (419 aa).

Mn(2+)-binding residues include His-262, Asp-294, and Asp-296.

It belongs to the rhamnose isomerase family. As to quaternary structure, homotetramer. The cofactor is Mn(2+).

Its subcellular location is the cytoplasm. The catalysed reaction is L-rhamnopyranose = L-rhamnulose. It participates in carbohydrate degradation; L-rhamnose degradation; glycerone phosphate from L-rhamnose: step 1/3. Its function is as follows. Catalyzes the interconversion of L-rhamnose and L-rhamnulose. The chain is L-rhamnose isomerase from Klebsiella pneumoniae subsp. pneumoniae (strain ATCC 700721 / MGH 78578).